The primary structure comprises 172 residues: Bifunctional protein PyrR (172 aa).

A PRPP-binding motif is present at residues 90 to 102 (LVLVDDVLMSGRT).

The protein belongs to the purine/pyrimidine phosphoribosyltransferase family. PyrR subfamily.

It catalyses the reaction UMP + diphosphate = 5-phospho-alpha-D-ribose 1-diphosphate + uracil. Its function is as follows. Regulates the transcription of the pyrimidine nucleotide (pyr) operon in response to exogenous pyrimidines. Functionally, also displays a weak uracil phosphoribosyltransferase activity which is not physiologically significant. This Pseudomonas entomophila (strain L48) protein is Bifunctional protein PyrR.